We begin with the raw amino-acid sequence, 307 residues long: Cytochrome c1 1, heme protein, mitochondrial (307 aa).

The transit peptide at 1–64 (MVGGGVIQQI…LLSFSTVASA (64 aa)) directs the protein to the mitochondrion. Residues 65–270 (DEAEHGLESP…EPEMEERKLM (206 aa)) lie on the Mitochondrial intermembrane side of the membrane. The 157-residue stretch at 90–246 (ASIRRGHQVY…YEDGVPATEA (157 aa)) folds into the Cytochrome c domain. Heme c contacts are provided by cysteine 103, cysteine 106, histidine 107, and methionine 226. A helical membrane pass occupies residues 271 to 288 (GFKWIFLLSLALLQAAYY). Residues 289 to 307 (RRLKWSVLKSRKLVLDVVN) lie on the Mitochondrial matrix side of the membrane.

The protein belongs to the cytochrome c family. As to quaternary structure, component of the ubiquinol-cytochrome c oxidoreductase (cytochrome b-c1 complex, complex III, CIII), a multisubunit enzyme composed of 10 subunits. The complex is composed of 3 respiratory subunits cytochrome b (MT-CYB), cytochrome c1 (CYC1-1 or CYC1-2) and Rieske protein (UCR1-1 or UCR1-2), 2 core protein subunits MPPalpha1 (or MPPalpha2) and MPPB, and 5 low-molecular weight protein subunits QCR7-1 (or QCR7-2), UCRQ-1 (or UCRQ-2), QCR9, UCRY and probably QCR6-1 (or QCR6-2). The complex exists as an obligatory dimer and forms supercomplexes (SCs) in the inner mitochondrial membrane with NADH-ubiquinone oxidoreductase (complex I, CI), resulting in different assemblies (supercomplexes SCI(1)III(2) and SCI(2)III(4)). Binds 1 heme c group covalently per subunit.

The protein resides in the mitochondrion inner membrane. Functionally, component of the ubiquinol-cytochrome c oxidoreductase, a multisubunit transmembrane complex that is part of the mitochondrial electron transport chain which drives oxidative phosphorylation. The respiratory chain contains 3 multisubunit complexes succinate dehydrogenase (complex II, CII), ubiquinol-cytochrome c oxidoreductase (cytochrome b-c1 complex, complex III, CIII) and cytochrome c oxidase (complex IV, CIV), that cooperate to transfer electrons derived from NADH and succinate to molecular oxygen, creating an electrochemical gradient over the inner membrane that drives transmembrane transport and the ATP synthase. The cytochrome b-c1 complex catalyzes electron transfer from ubiquinol to cytochrome c, linking this redox reaction to translocation of protons across the mitochondrial inner membrane, with protons being carried across the membrane as hydrogens on the quinol. In the process called Q cycle, 2 protons are consumed from the matrix, 4 protons are released into the intermembrane space and 2 electrons are passed to cytochrome c. Cytochrome c1 is a catalytic core subunit containing a c-type heme. It transfers electrons from the [2Fe-2S] iron-sulfur cluster of the Rieske protein to cytochrome c. The chain is Cytochrome c1 1, heme protein, mitochondrial (CYC1-1) from Arabidopsis thaliana (Mouse-ear cress).